Consider the following 458-residue polypeptide: Adenylosuccinate synthetase (458 aa).

Residues 17 to 23 (GDEGKGK) and 45 to 47 (GHT) each bind GTP. D18 acts as the Proton acceptor in catalysis. D18 and G45 together coordinate Mg(2+). IMP is bound by residues 18-21 (DEGK), 43-46 (NAGH), T137, R151, Q247, T262, and R330. H46 serves as the catalytic Proton donor. 326 to 332 (VTTGRSR) serves as a coordination point for substrate. Residues R332, 358-360 (KLD), and 440-442 (STS) contribute to the GTP site.

This sequence belongs to the adenylosuccinate synthetase family. As to quaternary structure, homodimer. The cofactor is Mg(2+).

Its subcellular location is the cytoplasm. It carries out the reaction IMP + L-aspartate + GTP = N(6)-(1,2-dicarboxyethyl)-AMP + GDP + phosphate + 2 H(+). It participates in purine metabolism; AMP biosynthesis via de novo pathway; AMP from IMP: step 1/2. Functionally, plays an important role in the de novo pathway of purine nucleotide biosynthesis. Catalyzes the first committed step in the biosynthesis of AMP from IMP. In Acidovorax sp. (strain JS42), this protein is Adenylosuccinate synthetase.